Consider the following 85-residue polypeptide: Sec-independent protein translocase protein TatA (85 aa).

The chain crosses the membrane as a helical span at residues 1–21 (MGIFDWKHWLIILIVVVLVFG). Residues 43 to 85 (VNTEEGENRPAEPQTGTSAGDTLNKTQTIEGQAQKVDTPVRKD) are disordered. The segment covering 56–73 (QTGTSAGDTLNKTQTIEG) has biased composition (polar residues).

Belongs to the TatA/E family. As to quaternary structure, the Tat system comprises two distinct complexes: a TatABC complex, containing multiple copies of TatA, TatB and TatC subunits, and a separate TatA complex, containing only TatA subunits. Substrates initially bind to the TatABC complex, which probably triggers association of the separate TatA complex to form the active translocon.

The protein localises to the cell inner membrane. Functionally, part of the twin-arginine translocation (Tat) system that transports large folded proteins containing a characteristic twin-arginine motif in their signal peptide across membranes. TatA could form the protein-conducting channel of the Tat system. The sequence is that of Sec-independent protein translocase protein TatA from Azotobacter vinelandii (strain DJ / ATCC BAA-1303).